Here is a 129-residue protein sequence, read N- to C-terminus: Modulator protein MzrA (129 aa).

Topologically, residues 1–14 (MINFRGRFGRPLWH) are cytoplasmic. A helical transmembrane segment spans residues 15–35 (YLVLPVVLLLLAVILLTPMIV). Topologically, residues 36 to 129 (QTESTLKIRP…VFRSNQQNLG (94 aa)) are periplasmic.

It belongs to the MzrA family. Interacts with EnvZ.

The protein localises to the cell inner membrane. Its function is as follows. Modulates the activity of the EnvZ/OmpR two-component regulatory system, probably by directly modulating EnvZ enzymatic activity and increasing stability of phosphorylated OmpR. The protein is Modulator protein MzrA of Yersinia pestis (strain Pestoides F).